Here is a 497-residue protein sequence, read N- to C-terminus: 3-octaprenyl-4-hydroxybenzoate carboxy-lyase (497 aa).

Mn(2+) is bound at residue Asn-175. Prenylated FMN contacts are provided by residues Ile-178–Arg-180, Arg-192–Leu-194, and Arg-197–Gly-198. Residue Glu-241 coordinates Mn(2+). Catalysis depends on Asp-290, which acts as the Proton donor.

It belongs to the UbiD family. As to quaternary structure, homohexamer. It depends on prenylated FMN as a cofactor. The cofactor is Mn(2+).

The protein localises to the cell membrane. It carries out the reaction a 4-hydroxy-3-(all-trans-polyprenyl)benzoate + H(+) = a 2-(all-trans-polyprenyl)phenol + CO2. The protein operates within cofactor biosynthesis; ubiquinone biosynthesis. Its function is as follows. Catalyzes the decarboxylation of 3-octaprenyl-4-hydroxy benzoate to 2-octaprenylphenol, an intermediate step in ubiquinone biosynthesis. The polypeptide is 3-octaprenyl-4-hydroxybenzoate carboxy-lyase (Shigella boydii serotype 4 (strain Sb227)).